We begin with the raw amino-acid sequence, 517 residues long: Bifunctional purine biosynthesis protein PurH (517 aa).

Residues 1 to 145 form the MGS-like domain; the sequence is MSPLALVSVS…KNHKDVSVLV (145 aa).

It belongs to the PurH family.

The enzyme catalyses (6R)-10-formyltetrahydrofolate + 5-amino-1-(5-phospho-beta-D-ribosyl)imidazole-4-carboxamide = 5-formamido-1-(5-phospho-D-ribosyl)imidazole-4-carboxamide + (6S)-5,6,7,8-tetrahydrofolate. It catalyses the reaction IMP + H2O = 5-formamido-1-(5-phospho-D-ribosyl)imidazole-4-carboxamide. It functions in the pathway purine metabolism; IMP biosynthesis via de novo pathway; 5-formamido-1-(5-phospho-D-ribosyl)imidazole-4-carboxamide from 5-amino-1-(5-phospho-D-ribosyl)imidazole-4-carboxamide (10-formyl THF route): step 1/1. Its pathway is purine metabolism; IMP biosynthesis via de novo pathway; IMP from 5-formamido-1-(5-phospho-D-ribosyl)imidazole-4-carboxamide: step 1/1. The sequence is that of Bifunctional purine biosynthesis protein PurH from Prochlorococcus marinus (strain AS9601).